We begin with the raw amino-acid sequence, 430 residues long: Dynactin subunit 2 (430 aa).

Disordered regions lie at residues 1-51 and 201-228; these read MSEG…IDRS and SLSS…SSSS. Residues 32–44 are compositionally biased toward polar residues; sequence SISNLADESSELV. 2 coiled-coil regions span residues 241–319 and 397–430; these read TGEQ…QDET and DDSF…QQQQ.

It belongs to the dynactin subunit 2 family. In terms of assembly, subunit of dynactin, a multiprotein complex associated with dynein.

The protein localises to the cytoplasm. The protein resides in the cytoskeleton. It is found in the membrane. Its function is as follows. Modulates cytoplasmic dynein binding to an organelle, and plays a role in prometaphase chromosome alignment and spindle organization during mitosis. This Dictyostelium discoideum (Social amoeba) protein is Dynactin subunit 2 (dynB).